The primary structure comprises 257 residues: Acetyl-coenzyme A carboxylase carboxyl transferase subunit beta 1 (257 aa).

The 257-residue stretch at 1 to 257 folds into the CoA carboxyltransferase N-terminal domain; it reads MNINDIFLKR…KMHVNTGGEA (257 aa).

It belongs to the AccD/PCCB family. As to quaternary structure, acetyl-CoA carboxylase is a heterohexamer composed of biotin carboxyl carrier protein (AccB), biotin carboxylase (AccC) and two subunits each of ACCase subunit alpha (AccA) and ACCase subunit beta (AccD).

Its subcellular location is the cytoplasm. The catalysed reaction is N(6)-carboxybiotinyl-L-lysyl-[protein] + acetyl-CoA = N(6)-biotinyl-L-lysyl-[protein] + malonyl-CoA. It participates in lipid metabolism; malonyl-CoA biosynthesis; malonyl-CoA from acetyl-CoA: step 1/1. Component of the acetyl coenzyme A carboxylase (ACC) complex. Biotin carboxylase (BC) catalyzes the carboxylation of biotin on its carrier protein (BCCP) and then the CO(2) group is transferred by the transcarboxylase to acetyl-CoA to form malonyl-CoA. The polypeptide is Acetyl-coenzyme A carboxylase carboxyl transferase subunit beta 1 (Lachnospira eligens (strain ATCC 27750 / DSM 3376 / VPI C15-48 / C15-B4) (Eubacterium eligens)).